A 390-amino-acid polypeptide reads, in one-letter code: Putative gustatory receptor 36c (390 aa).

The Cytoplasmic portion of the chain corresponds to methionine 1–glutamate 4. A helical membrane pass occupies residues serine 5 to phenylalanine 25. At aspartate 26–lysine 36 the chain is on the extracellular side. Residues tryptophan 37–tryptophan 57 form a helical membrane-spanning segment. At threonine 58–histidine 75 the chain is on the cytoplasmic side. The chain crosses the membrane as a helical span at residues glutamate 76–leucine 96. Residues arginine 97–lysine 132 are Extracellular-facing. Residues phenylalanine 133–serine 153 form a helical membrane-spanning segment. The Cytoplasmic portion of the chain corresponds to valine 154–glutamine 165. The chain crosses the membrane as a helical span at residues tyrosine 166 to valine 186. Residues arginine 187 to alanine 254 are Extracellular-facing. A helical membrane pass occupies residues methionine 255–leucine 275. The Cytoplasmic portion of the chain corresponds to lysine 276 to threonine 288. The chain crosses the membrane as a helical span at residues valine 289–valine 309. Residues methionine 310–phenylalanine 390 lie on the Extracellular side of the membrane.

This sequence belongs to the insect chemoreceptor superfamily. Gustatory receptor (GR) family. Gr22e subfamily. Expressed in neurons of the terminal external chemosensory organ of larvae.

It localises to the cell membrane. Probable gustatory receptor which mediates acceptance or avoidance behavior, depending on its substrates. The chain is Putative gustatory receptor 36c (Gr36c) from Drosophila melanogaster (Fruit fly).